Here is a 250-residue protein sequence, read N- to C-terminus: Histone H1.1 (250 aa).

The segment covering 1 to 11 (MSDSAVATSAS) has biased composition (polar residues). Disordered regions lie at residues 1–52 (MSDS…QQMV) and 104–250 (QTKG…ATKK). The 75-residue stretch at 44–118 (SHPPTQQMVD…GASGSFKLSA (75 aa)) folds into the H15 domain. Over residues 122-133 (KDAKPKASAVEK) the composition is skewed to basic and acidic residues. Low complexity predominate over residues 140-161 (ASAARATKSKSSTSTTKKAAGA). The span at 174–191 (KNVEKKKADKEKAKDAKK) shows a compositional bias: basic and acidic residues. Over residues 192-234 (TGTIKAKPTTAKAKSSATKPKTPKPKTTSAKPKKVVSATTPKK) the composition is skewed to low complexity. Residues 235-250 (TAVKKPKAKTASATKK) are compositionally biased toward basic residues.

Belongs to the histone H1/H5 family.

It localises to the nucleus. The protein resides in the chromosome. Functionally, histones H1 are necessary for the condensation of nucleosome chains into higher-order structures. This chain is Histone H1.1 (His1.1), found in Drosophila virilis (Fruit fly).